Here is a 373-residue protein sequence, read N- to C-terminus: Protodeoxyviolaceinate monooxygenase (373 aa).

An FAD-binding site is contributed by 2–20; the sequence is KILVIGAGPAGLVFASQLK.

FAD serves as cofactor.

The catalysed reaction is protodeoxyviolaceinate + NADH + O2 + H(+) = protoviolaceinate + NAD(+) + H2O. It carries out the reaction protodeoxyviolaceinate + NADPH + O2 + H(+) = protoviolaceinate + NADP(+) + H2O. It functions in the pathway pigment biosynthesis; violacein biosynthesis. Its function is as follows. Catalyzes the oxygenation of the 6-position of protodeoxyviolaceinate to form proviolacein. This is Protodeoxyviolaceinate monooxygenase (vioD) from Chromobacterium violaceum (strain ATCC 12472 / DSM 30191 / JCM 1249 / CCUG 213 / NBRC 12614 / NCIMB 9131 / NCTC 9757 / MK).